The following is a 266-amino-acid chain: Transcription factor atoh8 (266 aa).

The tract at residues 140–164 (AASQAPAGGSERAESPRKRAGEPSG) is disordered. A compositionally biased stretch (basic and acidic residues) spans 150-160 (ERAESPRKRAG). The basic motif; degenerate stretch occupies residues 175 to 188 (TRRLLANARERTRV). A bHLH domain is found at 175–227 (TRRLLANARERTRVHTISAAFEALRKQVPCYSYGQKLSKLAILRIACNYILSL). Residues 189 to 227 (HTISAAFEALRKQVPCYSYGQKLSKLAILRIACNYILSL) are helix-loop-helix motif.

It localises to the nucleus. The protein resides in the nucleus speckle. It is found in the cytoplasm. In terms of biological role, transcription factor that binds a palindromic (canonical) core consensus DNA sequence 5'-CANNTG- 3' known as an E-box element, possibly as a heterodimer with other bHLH proteins. During development, is required for heart looping and swim bladder formation by acting in concert with GATA4 and ZFPM1. During the development of both the retina and skeletal muscles is required for neural retinal cell through modulating PAX6 and NEUROG3 expression and myogenic differentiation. The chain is Transcription factor atoh8 from Danio rerio (Zebrafish).